An 817-amino-acid chain; its full sequence is Dolichyl-phosphate-mannose--protein mannosyltransferase 1 (817 aa).

Ser2 bears the N-acetylserine mark. Residues 2 to 50 (SEEKTYKRVEQDDPVPELDIKQGPVRPFIVTDPSAELASLRTMVTLKEK) lie on the Cytoplasmic side of the membrane. Residues 51–70 (LLVACLAVFTAVIRLHGLAW) form a helical membrane-spanning segment. Over 71-135 (PDSVVFDEVH…DSFPSTTPYV (65 aa)) the chain is Lumenal. Residues 136–154 (LMRFFSASLGALTVILMYM) traverse the membrane as a helical segment. The Cytoplasmic segment spans residues 155-179 (TLRYSGVRMWVALMSAICFAVENSY). Residues 180-200 (VTISRYILLDAPLMFFIAAAV) form a helical membrane-spanning segment. Residues 201–234 (YSFKKYEMYPANSLNAYKSLLATGIALGMASSSK) lie on the Lumenal side of the membrane. A helical membrane pass occupies residues 235–259 (WVGLFTVTWVGLLCIWRLWFMIGDL). Over 260–273 (TKSSKSIFKVAFAK) the chain is Cytoplasmic. A helical transmembrane segment spans residues 274-291 (LAFLLGVPFALYLVFFYI). Topologically, residues 292–584 (HFQSLTLDGD…GENNRNVYLL (293 aa)) are lumenal. MIR domains follow at residues 324-378 (VADV…LELY), 388-448 (FQNL…VEID), and 459-514 (ERVI…VENN). Asn390 and Asn513 each carry an N-linked (GlcNAc...) asparagine glycan. Residues 585–605 (GNAIVWWAVTAFIGIFGLIVI) traverse the membrane as a helical segment. The Cytoplasmic portion of the chain corresponds to 606–685 (TELFSWQLGK…SYVFRSKRQM (80 aa)). Residues 686–710 (GYAVVITFLAASVYFFKSFSPIIYG) form a helical membrane-spanning segment. At 711–817 (TPWTQELCQK…LKVEKRAVLE (107 aa)) the chain is on the lumenal side. Asn743 carries an N-linked (GlcNAc...) asparagine glycan.

This sequence belongs to the glycosyltransferase 39 family. In terms of assembly, PMT1 and PMT2 form a functional heterodimer. The complex interacts with endoplasmic reticulum proteins EMP24, ERV25, ERP1, ERP2, CDC48, HRD1, USA1, YOS9, ERO1, PDI1, UBR1, Cue4, DFM1 and TED1. Forms also a minor complex with PMT3.

It localises to the endoplasmic reticulum membrane. The catalysed reaction is a di-trans,poly-cis-dolichyl beta-D-mannosyl phosphate + L-seryl-[protein] = 3-O-(alpha-D-mannosyl)-L-seryl-[protein] + a di-trans,poly-cis-dolichyl phosphate + H(+). It carries out the reaction a di-trans,poly-cis-dolichyl beta-D-mannosyl phosphate + L-threonyl-[protein] = 3-O-(alpha-D-mannosyl)-L-threonyl-[protein] + a di-trans,poly-cis-dolichyl phosphate + H(+). It participates in protein modification; protein glycosylation. In terms of biological role, protein O-mannosyltransferase involved in O-glycosylation which is essential for cell wall rigidity. Forms a heterodimeric complex with PMT2 and more rarely with PMT3 to transfer mannose from Dol-P-mannose to Ser or Thr residues on proteins. The PMT1-PMT2 complex participates in oxidative protein folding, ER-associated protein degradation (ERAD), as well as ER export. Required for incorporation of proteins in the cell wall. The sequence is that of Dolichyl-phosphate-mannose--protein mannosyltransferase 1 from Saccharomyces cerevisiae (strain ATCC 204508 / S288c) (Baker's yeast).